A 447-amino-acid polypeptide reads, in one-letter code: Ribulose bisphosphate carboxylase large chain (447 aa).

Substrate is bound by residues N89 and T139. The Proton acceptor role is filled by K141. K143 contributes to the substrate binding site. Mg(2+) contacts are provided by K167, D169, and E170. An N6-carboxylysine modification is found at K167. H260 functions as the Proton acceptor in the catalytic mechanism. Substrate-binding residues include R261, H293, and S345.

It belongs to the RuBisCO large chain family. Type I subfamily. As to quaternary structure, heterohexadecamer of 8 large chains and 8 small chains; disulfide-linked. The disulfide link is formed within the large subunit homodimers. It depends on Mg(2+) as a cofactor. In terms of processing, the disulfide bond which can form in the large chain dimeric partners within the hexadecamer appears to be associated with oxidative stress and protein turnover.

It localises to the plastid. The protein resides in the chloroplast. It catalyses the reaction 2 (2R)-3-phosphoglycerate + 2 H(+) = D-ribulose 1,5-bisphosphate + CO2 + H2O. The enzyme catalyses D-ribulose 1,5-bisphosphate + O2 = 2-phosphoglycolate + (2R)-3-phosphoglycerate + 2 H(+). Its function is as follows. RuBisCO catalyzes two reactions: the carboxylation of D-ribulose 1,5-bisphosphate, the primary event in carbon dioxide fixation, as well as the oxidative fragmentation of the pentose substrate in the photorespiration process. Both reactions occur simultaneously and in competition at the same active site. This Convolvulus tricolor (Dwarf morning glory) protein is Ribulose bisphosphate carboxylase large chain.